We begin with the raw amino-acid sequence, 545 residues long: Methionine--tRNA ligase (545 aa).

A 'HIGH' region motif is present at residues 13-23; it reads PYANGEIHLGH. Zn(2+)-binding residues include Cys144, Cys147, Cys157, and Cys160. The short motif at 329-333 is the 'KMSKS' region element; the sequence is KMSKS. Lys332 is an ATP binding site.

It belongs to the class-I aminoacyl-tRNA synthetase family. MetG type 1 subfamily. Monomer. It depends on Zn(2+) as a cofactor.

The protein localises to the cytoplasm. It catalyses the reaction tRNA(Met) + L-methionine + ATP = L-methionyl-tRNA(Met) + AMP + diphosphate. Its function is as follows. Is required not only for elongation of protein synthesis but also for the initiation of all mRNA translation through initiator tRNA(fMet) aminoacylation. The sequence is that of Methionine--tRNA ligase from Vesicomyosocius okutanii subsp. Calyptogena okutanii (strain HA).